Here is a 420-residue protein sequence, read N- to C-terminus: Tyrosine--tRNA ligase (420 aa).

Residue tyrosine 33 participates in L-tyrosine binding. Residues 38-47 carry the 'HIGH' region motif; it reads PTADSLHVGH. Residues tyrosine 167 and glutamine 171 each contribute to the L-tyrosine site. Residues 227 to 231 carry the 'KMSKS' region motif; that stretch reads KFGKT. Lysine 230 provides a ligand contact to ATP. An S4 RNA-binding domain is found at 353–419; that stretch reads LTVADLLVKV…GKRNYALVKV (67 aa).

Belongs to the class-I aminoacyl-tRNA synthetase family. TyrS type 1 subfamily. In terms of assembly, homodimer.

It is found in the cytoplasm. The enzyme catalyses tRNA(Tyr) + L-tyrosine + ATP = L-tyrosyl-tRNA(Tyr) + AMP + diphosphate + H(+). Its function is as follows. Catalyzes the attachment of tyrosine to tRNA(Tyr) in a two-step reaction: tyrosine is first activated by ATP to form Tyr-AMP and then transferred to the acceptor end of tRNA(Tyr). The protein is Tyrosine--tRNA ligase of Anaeromyxobacter dehalogenans (strain 2CP-1 / ATCC BAA-258).